Reading from the N-terminus, the 710-residue chain is Polyribonucleotide nucleotidyltransferase (710 aa).

Positions 487 and 493 each coordinate Mg(2+). One can recognise a KH domain in the interval 554 to 613 (PKIITMTINPDKIRDVIGPSGKQINKIIEETGVKIDIEQDGTVFISSIDQQMNEKAKKII). Residues 623–691 (GEIYLGKVKR…KQGRVNLSRK (69 aa)) enclose the S1 motif domain.

The protein belongs to the polyribonucleotide nucleotidyltransferase family. Requires Mg(2+) as cofactor.

Its subcellular location is the cytoplasm. The enzyme catalyses RNA(n+1) + phosphate = RNA(n) + a ribonucleoside 5'-diphosphate. In terms of biological role, involved in mRNA degradation. Catalyzes the phosphorolysis of single-stranded polyribonucleotides processively in the 3'- to 5'-direction. The chain is Polyribonucleotide nucleotidyltransferase from Bacillus cytotoxicus (strain DSM 22905 / CIP 110041 / 391-98 / NVH 391-98).